The sequence spans 909 residues: Lon protease homolog 2, peroxisomal (909 aa).

Residues 1 to 230 (MAPVRAPTAR…KVIELLDRQV (230 aa)) enclose the Lon N-terminal domain. The disordered stretch occupies residues 249–269 (FPMDPDSTKPGKVKPPVKAPG). 463–470 (GPPGVGKT) is an ATP binding site. The Lon proteolytic domain maps to 706–893 (TSRPGIVTGL…WEAIRYVWPD (188 aa)). Active-site residues include Ser-799 and Lys-842. The short motif at 907-909 (SRL) is the Microbody targeting signal element.

This sequence belongs to the peptidase S16 family.

Its subcellular location is the peroxisome matrix. The protein resides in the cytoplasm. The enzyme catalyses Hydrolysis of proteins in presence of ATP.. In terms of biological role, ATP-dependent serine protease that mediates the selective degradation of misfolded and unassembled polypeptides in the peroxisomal matrix. Necessary for type 2 peroxisome targeting signal (PTS2)-containing protein processing and facilitates peroxisome matrix protein import. In Sordaria macrospora (strain ATCC MYA-333 / DSM 997 / K(L3346) / K-hell), this protein is Lon protease homolog 2, peroxisomal.